A 142-amino-acid polypeptide reads, in one-letter code: MRLSWFRVLTVLSICLSAVATATGAEGKRKLQIGVKKRVDHCPIKSRKGDVLHMHYTGKLEDGTEFDSSLPQNQPFVFSLGTGQVIKGWDQGLLGMCEGEKRKLVIPSELGYGERGAPPKIPGGATLVFEVELLKIERRTEL.

Positions 1 to 21 (MRLSWFRVLTVLSICLSAVAT) are cleaved as a signal peptide. Residues 49-137 (GDVLHMHYTG…VFEVELLKIE (89 aa)) enclose the PPIase FKBP-type domain. The Prevents secretion from ER motif lies at 139–142 (RTEL).

It belongs to the FKBP-type PPIase family. FKBP2 subfamily. As to quaternary structure, interacts with ARFGEF1/BIG1 and the C-terminal of EPB41L2. T-cells and thymus.

It is found in the endoplasmic reticulum membrane. The catalysed reaction is [protein]-peptidylproline (omega=180) = [protein]-peptidylproline (omega=0). Inhibited by both FK506 and rapamycin. Its function is as follows. PPIases accelerate the folding of proteins. It catalyzes the cis-trans isomerization of proline imidic peptide bonds in oligopeptides. In Homo sapiens (Human), this protein is Peptidyl-prolyl cis-trans isomerase FKBP2 (FKBP2).